The following is a 257-amino-acid chain: Thioredoxin-dependent peroxide reductase, mitochondrial (257 aa).

The N-terminal 62 residues, 1 to 62 (MAAAAGRLLW…FAFSTSSSFH (62 aa)), are a transit peptide targeting the mitochondrion. The region spanning 64 to 222 (PAVTQHAPHF…PLRLVKAFQF (159 aa)) is the Thioredoxin domain. Position 84 is an N6-succinyllysine (Lys84). Residue Lys92 is modified to N6-acetyllysine; alternate. Residue Lys92 is modified to N6-succinyllysine; alternate. Cys109 acts as the Cysteine sulfenic acid (-SOH) intermediate in catalysis. Thr147 carries the phosphothreonine modification.

It belongs to the peroxiredoxin family. AhpC/Prx1 subfamily. In terms of assembly, homodimer; disulfide-linked, upon oxidation. 6 homodimers assemble to form a ring-like dodecamer. Interacts with NEK6. Interacts with LRRK2. Interacts with MAP3K13. Interacts with RPS6KC1 (via PX domain). Phosphorylated by LRRK2; phosphorylation reduces perodixase activity. Post-translationally, the enzyme can be inactivated by further oxidation of the cysteine sulfenic acid (C(P)-SOH) to sulphinic acid (C(P)-SO2H) and sulphonic acid (C(P)-SO3H) instead of its condensation to a disulfide bond. In terms of processing, S-palmitoylated. Ubiquitous.

Its subcellular location is the mitochondrion. The protein localises to the cytoplasm. It localises to the early endosome. The catalysed reaction is a hydroperoxide + [thioredoxin]-dithiol = an alcohol + [thioredoxin]-disulfide + H2O. In terms of biological role, thiol-specific peroxidase that catalyzes the reduction of hydrogen peroxide and organic hydroperoxides to water and alcohols, respectively. Plays a role in cell protection against oxidative stress by detoxifying peroxides. Acts synergistically with MAP3K13 to regulate the activation of NF-kappa-B in the cytosol. Required for the maintenance of physical strength. This chain is Thioredoxin-dependent peroxide reductase, mitochondrial (Prdx3), found in Rattus norvegicus (Rat).